The chain runs to 153 residues: Small ribosomal subunit protein uS13 (153 aa).

Positions 129 to 153 are disordered; the sequence is RGQRTKSTFRHGSSVGVSRTRPTGN. Residues 143–153 are compositionally biased toward polar residues; that stretch reads VGVSRTRPTGN.

It belongs to the universal ribosomal protein uS13 family. As to quaternary structure, part of the 30S ribosomal subunit. Forms a loose heterodimer with protein S19. Forms two bridges to the 50S subunit in the 70S ribosome.

Located at the top of the head of the 30S subunit, it contacts several helices of the 16S rRNA. In the 70S ribosome it contacts the 23S rRNA (bridge B1a) and protein L5 of the 50S subunit (bridge B1b), connecting the 2 subunits; these bridges are implicated in subunit movement. In Methanosphaera stadtmanae (strain ATCC 43021 / DSM 3091 / JCM 11832 / MCB-3), this protein is Small ribosomal subunit protein uS13.